The sequence spans 421 residues: UDP-N-acetylglucosamine 1-carboxyvinyltransferase (421 aa).

22-23 (KN) contacts phosphoenolpyruvate. Arg-93 contributes to the UDP-N-acetyl-alpha-D-glucosamine binding site. The active-site Proton donor is Cys-117. Cys-117 bears the 2-(S-cysteinyl)pyruvic acid O-phosphothioketal mark. Residues 122-126 (RPVDL), Asp-308, and Val-330 contribute to the UDP-N-acetyl-alpha-D-glucosamine site.

It belongs to the EPSP synthase family. MurA subfamily.

Its subcellular location is the cytoplasm. It carries out the reaction phosphoenolpyruvate + UDP-N-acetyl-alpha-D-glucosamine = UDP-N-acetyl-3-O-(1-carboxyvinyl)-alpha-D-glucosamine + phosphate. It functions in the pathway cell wall biogenesis; peptidoglycan biosynthesis. Cell wall formation. Adds enolpyruvyl to UDP-N-acetylglucosamine. In Pseudomonas aeruginosa (strain LESB58), this protein is UDP-N-acetylglucosamine 1-carboxyvinyltransferase.